Reading from the N-terminus, the 56-residue chain is uncharacterized protein (56 aa).

Belongs to the archaeal ATPase family.

This is an uncharacterized protein from Methanocaldococcus jannaschii (strain ATCC 43067 / DSM 2661 / JAL-1 / JCM 10045 / NBRC 100440) (Methanococcus jannaschii).